Here is a 353-residue protein sequence, read N- to C-terminus: Histidinol-phosphate aminotransferase (353 aa).

N6-(pyridoxal phosphate)lysine is present on lysine 211.

It belongs to the class-II pyridoxal-phosphate-dependent aminotransferase family. Histidinol-phosphate aminotransferase subfamily. As to quaternary structure, homodimer. Pyridoxal 5'-phosphate is required as a cofactor.

It carries out the reaction L-histidinol phosphate + 2-oxoglutarate = 3-(imidazol-4-yl)-2-oxopropyl phosphate + L-glutamate. It participates in amino-acid biosynthesis; L-histidine biosynthesis; L-histidine from 5-phospho-alpha-D-ribose 1-diphosphate: step 7/9. This Klebsiella pneumoniae subsp. pneumoniae (strain ATCC 700721 / MGH 78578) protein is Histidinol-phosphate aminotransferase.